Here is a 308-residue protein sequence, read N- to C-terminus: D-alanine--D-alanine ligase (308 aa).

One can recognise an ATP-grasp domain in the interval 108-303; the sequence is KLVWKAAGLP…YEALCLKVLE (196 aa). 134–189 is an ATP binding site; it reads EAELGLPMFVKPACEGSSLGVTKVRKAGELAQAYAEARKFDPLVLAEQFVGGGEYT. Mg(2+) contacts are provided by Asp257, Glu270, and Asn272.

The protein belongs to the D-alanine--D-alanine ligase family. Requires Mg(2+) as cofactor. It depends on Mn(2+) as a cofactor.

The protein localises to the cytoplasm. The catalysed reaction is 2 D-alanine + ATP = D-alanyl-D-alanine + ADP + phosphate + H(+). It functions in the pathway cell wall biogenesis; peptidoglycan biosynthesis. In terms of biological role, cell wall formation. The chain is D-alanine--D-alanine ligase from Laribacter hongkongensis (strain HLHK9).